The primary structure comprises 369 residues: Anthranilate phosphoribosyltransferase (369 aa).

Residues Gly85, 88–89 (GD), Thr93, 95–98 (NLST), 113–121 (KHGNRAASS), and Ser125 contribute to the 5-phospho-alpha-D-ribose 1-diphosphate site. Gly85 provides a ligand contact to anthranilate. Ser97 is a Mg(2+) binding site. Asn116 is a binding site for anthranilate. Arg171 lines the anthranilate pocket. Mg(2+) contacts are provided by Asp229 and Glu230.

The protein belongs to the anthranilate phosphoribosyltransferase family. In terms of assembly, homodimer. It depends on Mg(2+) as a cofactor.

The catalysed reaction is N-(5-phospho-beta-D-ribosyl)anthranilate + diphosphate = 5-phospho-alpha-D-ribose 1-diphosphate + anthranilate. It participates in amino-acid biosynthesis; L-tryptophan biosynthesis; L-tryptophan from chorismate: step 2/5. Its function is as follows. Catalyzes the transfer of the phosphoribosyl group of 5-phosphorylribose-1-pyrophosphate (PRPP) to anthranilate to yield N-(5'-phosphoribosyl)-anthranilate (PRA). The chain is Anthranilate phosphoribosyltransferase from Frankia alni (strain DSM 45986 / CECT 9034 / ACN14a).